Consider the following 471-residue polypeptide: Putative F-box protein At5g36200 (471 aa).

Residues 1-46 (MAMSDLPNDLVEEIISRVPVKSIRAVSSTCKNWNTLSNDHSFTRKL) form the F-box domain.

The chain is Putative F-box protein At5g36200 from Arabidopsis thaliana (Mouse-ear cress).